A 112-amino-acid polypeptide reads, in one-letter code: Omega-agatoxin-1A (112 aa).

The first 19 residues, 1 to 19 (MMKFVVFLACLFVAAHSFA), serve as a signal peptide directing secretion. Residues 20–36 (VEGEEEYFEAEVPELER) constitute a propeptide that is removed on maturation. The propeptide at 103–109 (RSEESER) is glu-rich.

It belongs to the neurotoxin 04 (omega-agtx) family. 01 (type I omega-agtx) subfamily. In terms of assembly, heterodimer of two subunits, a major chain and a minor chain, linked by a disulfide bond. Post-translationally, proteolytically processed to yield the major and the minor chains. As to expression, expressed by the venom gland.

The protein localises to the secreted. Omega-agatoxins are antagonists of voltage-gated calcium channels. They block insect neuromuscular transmission presynaptically. This toxin is a blocker of L-type calcium channels (Cav/CACNA1). The protein is Omega-agatoxin-1A of Agelenopsis aperta (North American funnel-web spider).